Reading from the N-terminus, the 686-residue chain is Putative pentatricopeptide repeat-containing protein At3g49142 (686 aa).

12 PPR repeats span residues 73 to 103 (NSSLGVKLMRAYASLKDVASARKVFDEIPER), 104 to 138 (NVIIINVMIRSYVNNGFYGEGVKVFGTMCGCNVRP), 139 to 173 (DHYTFPCVLKACSCSGTIVIGRKIHGSATKVGLSS), 174 to 204 (TLFVGNGLVSMYGKCGFLSEARLVLDEMSRR), 205 to 239 (DVVSWNSLVVGYAQNQRFDDALEVCREMESVKISH), 240 to 272 (DAGTMASLLPAVSNTTTENVMYVKDMFFKMGKK), 273 to 307 (SLVSWNVMIGVYMKNAMPVEAVELYSRMEADGFEP), 308 to 342 (DAVSITSVLPACGDTSALSLGKKIHGYIERKKLIP), 343 to 373 (NLLLENALIDMYAKCGCLEKARDVFENMKSR), 374 to 408 (DVVSWTAMISAYGFSGRGCDAVALFSKLQDSGLVP), 409 to 439 (DSIAFVTTLAACSHAGLLEEGRSCFKLMTDH), and 445 to 475 (RLEHLACMVDLLGRAGKVKEAYRFIQDMSME). Positions 480–555 (VWGALLGACR…NPGASNVEVN (76 aa)) are type E motif. Residues 556–586 (RIIHTFLVGDRSHPQSDEIYRELDVLVKKMK) form a type E(+) motif region. Residues 587-686 (ELGYVPDSES…FGVCSCGDYW (100 aa)) are type DYW motif.

This sequence belongs to the PPR family. PCMP-H subfamily.

The protein is Putative pentatricopeptide repeat-containing protein At3g49142 (PCMP-H77) of Arabidopsis thaliana (Mouse-ear cress).